A 357-amino-acid chain; its full sequence is Elongation factor Ts (357 aa).

Residues 82 to 85 are involved in Mg(2+) ion dislocation from EF-Tu; sequence TDFV.

The protein belongs to the EF-Ts family.

It localises to the cytoplasm. In terms of biological role, associates with the EF-Tu.GDP complex and induces the exchange of GDP to GTP. It remains bound to the aminoacyl-tRNA.EF-Tu.GTP complex up to the GTP hydrolysis stage on the ribosome. This Campylobacter jejuni subsp. jejuni serotype O:23/36 (strain 81-176) protein is Elongation factor Ts.